Consider the following 264-residue polypeptide: COP9 signalosome complex subunit 7b (264 aa).

A2 is modified (N-acetylalanine). One can recognise a PCI domain in the interval 2–159 (AGEQKPSSNL…QLLEVDFCIG (158 aa)). Positions 194–237 (RANQYKENHSRTQQQVEAEVTNIKKTLKATASSSAQEMEQQLAE) form a coiled coil. Residues 223 to 232 (TASSSAQEME) are compositionally biased toward polar residues. The disordered stretch occupies residues 223–264 (TASSSAQEMEQQLAERECPPHAEQRQPTKKMSKVKGLVSSRH). The span at 235 to 248 (LAERECPPHAEQRQ) shows a compositional bias: basic and acidic residues.

Belongs to the CSN7/EIF3M family. CSN7 subfamily. As to quaternary structure, component of the CSN complex, composed of COPS1/GPS1, COPS2, COPS3, COPS4, COPS5, COPS6, COPS7 (COPS7A or COPS7B), COPS8 and COPS9. In the complex, it probably interacts directly with COPS1, COPS2, COPS4, COPS5, COPS6 and COPS8. Interacts with EIF3S6.

It localises to the cytoplasm. The protein localises to the nucleus. Functionally, component of the COP9 signalosome complex (CSN), a complex involved in various cellular and developmental processes. The CSN complex is an essential regulator of the ubiquitin (Ubl) conjugation pathway by mediating the deneddylation of the cullin subunits of SCF-type E3 ligase complexes, leading to decrease the Ubl ligase activity of SCF-type complexes such as SCF, CSA or DDB2. The complex is also involved in phosphorylation of p53/TP53, JUN, I-kappa-B-alpha/NFKBIA, ITPK1 and IRF8/ICSBP, possibly via its association with CK2 and PKD kinases. CSN-dependent phosphorylation of TP53 and JUN promotes and protects degradation by the Ubl system, respectively. The polypeptide is COP9 signalosome complex subunit 7b (COPS7B) (Bos taurus (Bovine)).